The sequence spans 243 residues: Protein unc-119 homolog B (243 aa).

A compositionally biased stretch (polar residues) spans 1 to 21 (MNSQSSRNETAATAVNGSDSA). The tract at residues 1-49 (MNSQSSRNETAATAVNGSDSAAASRDHKSGGGVLKRLKSRRNQVDRRPV) is disordered. Tetradecanoate is bound at residue Tyr134.

It belongs to the PDE6D/unc-119 family. Detected in embryo. Detected in larvae four days after fertilization, in retina and neural tissues (at protein level). Detected in embryos at the sphere stage, during gastrulation, somitogenesis and in swimming larvae, both within and outside of the developing nervous system. Detected in adults.

Its subcellular location is the cell projection. It is found in the cilium. Its function is as follows. Myristoyl-binding protein that acts as a cargo adapter: specifically binds the myristoyl moiety of a subset of N-terminally myristoylated proteins and is required for their localization. Plays a key role in localization of proteins to the primary cilium membrane. The protein is Protein unc-119 homolog B (unc119b) of Danio rerio (Zebrafish).